Reading from the N-terminus, the 104-residue chain is Large ribosomal subunit protein bL21 (104 aa).

Belongs to the bacterial ribosomal protein bL21 family. As to quaternary structure, part of the 50S ribosomal subunit. Contacts protein L20.

Functionally, this protein binds to 23S rRNA in the presence of protein L20. This chain is Large ribosomal subunit protein bL21, found in Francisella tularensis subsp. tularensis (strain FSC 198).